The following is a 312-amino-acid chain: Peroxidase (312 aa).

The N-terminal stretch at 1 to 23 (MAMGSASCISLVVLVALATAASG) is a signal peptide. At Q24 the chain carries Pyrrolidone carboxylic acid. Cystine bridges form between C34-C107, C67-C70, C113-C307, and C192-C218. Residue H65 is the Proton acceptor of the active site. Ca(2+) is bound by residues D66, G69, D71, and S73. Residue P155 coordinates substrate. H185 lines the heme b pocket. T186 lines the Ca(2+) pocket. Residues D231, T234, and D239 each contribute to the Ca(2+) site. An N-linked (GlcNAc...) asparagine glycan is attached at N262.

The protein belongs to the peroxidase family. Classical plant (class III) peroxidase subfamily. Ca(2+) serves as cofactor. Requires heme b as cofactor. Root.

The protein localises to the secreted. It catalyses the reaction 2 a phenolic donor + H2O2 = 2 a phenolic radical donor + 2 H2O. In terms of biological role, removal of H(2)O(2), oxidation of toxic reductants, biosynthesis and degradation of lignin, suberization, auxin catabolism, response to environmental stresses such as wounding, pathogen attack and oxidative stress. These functions might be dependent on each isozyme/isoform in each plant tissue. Its function is as follows. Involved in defense response to powdery meldew fungus. This Triticum aestivum (Wheat) protein is Peroxidase.